Reading from the N-terminus, the 277-residue chain is Large ribosomal subunit protein uL2 (277 aa).

A disordered region spans residues 226–277; that stretch reads NPIDHPHGGGEGRTSGGRHPVTPWGKPTKGKKTRSNKSTNKFILISRHKRKK.

The protein belongs to the universal ribosomal protein uL2 family. In terms of assembly, part of the 50S ribosomal subunit. Forms a bridge to the 30S subunit in the 70S ribosome.

One of the primary rRNA binding proteins. Required for association of the 30S and 50S subunits to form the 70S ribosome, for tRNA binding and peptide bond formation. It has been suggested to have peptidyltransferase activity; this is somewhat controversial. Makes several contacts with the 16S rRNA in the 70S ribosome. The protein is Large ribosomal subunit protein uL2 of Rhodopseudomonas palustris (strain BisA53).